The sequence spans 139 residues: Large ribosomal subunit protein bL17 (139 aa).

The disordered stretch occupies residues 120-139 (EDAKGRDSGPTQDNSEAEAA).

In terms of assembly, part of the 50S ribosomal subunit. Contacts protein L32. In terms of processing, may be methylated thrice, on undetermined residues.

This is Large ribosomal subunit protein bL17 from Rhodopseudomonas palustris (strain ATCC BAA-98 / CGA009).